Reading from the N-terminus, the 307-residue chain is Serine/threonine-protein phosphatase 4 catalytic subunit (307 aa).

Residue Ala2 is modified to N-acetylalanine. Asp54, His56, Asp82, and Asn114 together coordinate Mn(2+). The active-site Proton donor is the His115. Residues His164 and His238 each coordinate Mn(2+). Position 307 is a leucine methyl ester (Leu307).

Belongs to the PPP phosphatase family. PP-4 (PP-X) subfamily. As to quaternary structure, serine/threonine-protein phosphatase 4 (PP4) occurs in different assemblies of the catalytic and one or more regulatory subunits. Component of the PP4 complexes PPP4C-PPP4R1, PPP4C-PPP4R2, PPP4C-PPP4R2-PPP4R3A, PPP4C-PPP4R2-PPP4R3B and PPP4C-PPP4R4. The PPP4C-PPP4R2 complex appears to be a tetramer composed of 2 molecules of PPP4C and 2 molecules of PPP4R2. Interacts with REL, NFKB1/p50 and RELA. Interacts with SMN1 and GEMIN4. Interacts with IRS4 (phosphorylated). Interacts with SMEK1/PPP4R3A; the interaction requires PP4R2. Interacts with HDAC3. Requires Mn(2+) as cofactor. Methylation at the C-terminal Leu-307 is critical for interactions with regulatory subunits and functions in DNA repair.

The protein localises to the cytoplasm. The protein resides in the nucleus. Its subcellular location is the cytoskeleton. It is found in the microtubule organizing center. It localises to the centrosome. It catalyses the reaction O-phospho-L-seryl-[protein] + H2O = L-seryl-[protein] + phosphate. The enzyme catalyses O-phospho-L-threonyl-[protein] + H2O = L-threonyl-[protein] + phosphate. Protein phosphatase that is involved in many processes such as microtubule organization at centrosomes, maturation of spliceosomal snRNPs, apoptosis, DNA repair, tumor necrosis factor (TNF)-alpha signaling, activation of c-Jun N-terminal kinase MAPK8, regulation of histone acetylation, DNA damage checkpoint signaling, NF-kappa-B activation and cell migration. The PPP4C-PPP4R1 PP4 complex may play a role in dephosphorylation and regulation of HDAC3. The PPP4C-PPP4R2-PPP4R3A PP4 complex specifically dephosphorylates H2AX phosphorylated on Ser-140 (gamma-H2AX) generated during DNA replication and required for DNA DSB repair. Dephosphorylates NDEL1 at CDK1 phosphorylation sites and negatively regulates CDK1 activity in interphase. In response to DNA damage, catalyzes RPA2 dephosphorylation, an essential step for DNA repair since it allows the efficient RPA2-mediated recruitment of RAD51 to chromatin. This chain is Serine/threonine-protein phosphatase 4 catalytic subunit (PPP4C), found in Oryctolagus cuniculus (Rabbit).